We begin with the raw amino-acid sequence, 625 residues long: Endoglucanase 13 (625 aa).

The signal sequence occupies residues 1 to 34; it reads MAATMNKTPATTFLLIPAAASLVLLLAAAASVEA. Asp-91 (nucleophile) is an active-site residue. Residue His-427 is part of the active site. The N-linked (GlcNAc...) asparagine glycan is linked to Asn-440. Active-site residues include Asp-479 and Glu-488. Positions 509–530 are disordered; that stretch reads ADNTPEYTPAPNAPSPSNGGSP.

The protein belongs to the glycosyl hydrolase 9 (cellulase E) family.

The protein resides in the secreted. The catalysed reaction is Endohydrolysis of (1-&gt;4)-beta-D-glucosidic linkages in cellulose, lichenin and cereal beta-D-glucans.. This is Endoglucanase 13 (GLU6) from Oryza sativa subsp. indica (Rice).